The chain runs to 126 residues: Nucleoside diphosphate kinase B (126 aa).

Residues lysine 6, phenylalanine 37, threonine 68, arginine 79, and asparagine 89 each contribute to the ATP site. Catalysis depends on histidine 92, which acts as the Pros-phosphohistidine intermediate.

It belongs to the NDK family. The cofactor is Mg(2+).

It localises to the cytoplasm. The protein localises to the nucleus. The protein resides in the cell projection. It is found in the lamellipodium. Its subcellular location is the ruffle. It catalyses the reaction a 2'-deoxyribonucleoside 5'-diphosphate + ATP = a 2'-deoxyribonucleoside 5'-triphosphate + ADP. It carries out the reaction a ribonucleoside 5'-diphosphate + ATP = a ribonucleoside 5'-triphosphate + ADP. In terms of biological role, major role in the synthesis of nucleoside triphosphates other than ATP. The protein is Nucleoside diphosphate kinase B (nme2) of Merluccius capensis (Shallow-water Cape hake).